Reading from the N-terminus, the 945-residue chain is Isoleucine--tRNA ligase (945 aa).

The 'HIGH' region signature appears at 66–76 (PYANGDIHLGH). E581 is an L-isoleucyl-5'-AMP binding site. The short motif at 622–626 (KMSKS) is the 'KMSKS' region element. ATP is bound at residue K625. C908, C911, C928, and C931 together coordinate Zn(2+).

This sequence belongs to the class-I aminoacyl-tRNA synthetase family. IleS type 1 subfamily. As to quaternary structure, monomer. Requires Zn(2+) as cofactor.

It localises to the cytoplasm. It catalyses the reaction tRNA(Ile) + L-isoleucine + ATP = L-isoleucyl-tRNA(Ile) + AMP + diphosphate. In terms of biological role, catalyzes the attachment of isoleucine to tRNA(Ile). As IleRS can inadvertently accommodate and process structurally similar amino acids such as valine, to avoid such errors it has two additional distinct tRNA(Ile)-dependent editing activities. One activity is designated as 'pretransfer' editing and involves the hydrolysis of activated Val-AMP. The other activity is designated 'posttransfer' editing and involves deacylation of mischarged Val-tRNA(Ile). This Paraburkholderia phymatum (strain DSM 17167 / CIP 108236 / LMG 21445 / STM815) (Burkholderia phymatum) protein is Isoleucine--tRNA ligase.